The primary structure comprises 303 residues: UDP-3-O-acyl-N-acetylglucosamine deacetylase (303 aa).

Zn(2+)-binding residues include His78, His237, and Asp241. His264 serves as the catalytic Proton donor.

It belongs to the LpxC family. Zn(2+) is required as a cofactor.

The enzyme catalyses a UDP-3-O-[(3R)-3-hydroxyacyl]-N-acetyl-alpha-D-glucosamine + H2O = a UDP-3-O-[(3R)-3-hydroxyacyl]-alpha-D-glucosamine + acetate. Its pathway is glycolipid biosynthesis; lipid IV(A) biosynthesis; lipid IV(A) from (3R)-3-hydroxytetradecanoyl-[acyl-carrier-protein] and UDP-N-acetyl-alpha-D-glucosamine: step 2/6. In terms of biological role, catalyzes the hydrolysis of UDP-3-O-myristoyl-N-acetylglucosamine to form UDP-3-O-myristoylglucosamine and acetate, the committed step in lipid A biosynthesis. In Coxiella burnetii (strain CbuG_Q212) (Coxiella burnetii (strain Q212)), this protein is UDP-3-O-acyl-N-acetylglucosamine deacetylase.